A 156-amino-acid polypeptide reads, in one-letter code: 6,7-dimethyl-8-ribityllumazine synthase (156 aa).

Residues F22, 57 to 59 (AYE), and 81 to 83 (TVI) contribute to the 5-amino-6-(D-ribitylamino)uracil site. Residue 86 to 87 (GT) coordinates (2S)-2-hydroxy-3-oxobutyl phosphate. H89 acts as the Proton donor in catalysis. F114 is a 5-amino-6-(D-ribitylamino)uracil binding site. Residue R128 coordinates (2S)-2-hydroxy-3-oxobutyl phosphate.

The protein belongs to the DMRL synthase family. Forms an icosahedral capsid composed of 60 subunits, arranged as a dodecamer of pentamers.

It carries out the reaction (2S)-2-hydroxy-3-oxobutyl phosphate + 5-amino-6-(D-ribitylamino)uracil = 6,7-dimethyl-8-(1-D-ribityl)lumazine + phosphate + 2 H2O + H(+). Its pathway is cofactor biosynthesis; riboflavin biosynthesis; riboflavin from 2-hydroxy-3-oxobutyl phosphate and 5-amino-6-(D-ribitylamino)uracil: step 1/2. Catalyzes the formation of 6,7-dimethyl-8-ribityllumazine by condensation of 5-amino-6-(D-ribitylamino)uracil with 3,4-dihydroxy-2-butanone 4-phosphate. This is the penultimate step in the biosynthesis of riboflavin. This chain is 6,7-dimethyl-8-ribityllumazine synthase, found in Yersinia pseudotuberculosis serotype O:1b (strain IP 31758).